A 367-amino-acid polypeptide reads, in one-letter code: Aurora kinase (367 aa).

Residues 30-49 are disordered; sequence TTATNGAPPQARVQPGKGYR. The Protein kinase domain occupies 109–360; that stretch reads FEIGKVLGKG…LKEVKKHPWI (252 aa). ATP-binding positions include 115 to 123 and lysine 138; that span reads LGKGKFGRV. Residue aspartate 232 is the Proton acceptor of the active site.

Belongs to the protein kinase superfamily. Ser/Thr protein kinase family. Aurora subfamily.

The protein resides in the nucleus. It localises to the cytoplasm. It is found in the cytoskeleton. The protein localises to the spindle. Its subcellular location is the chromosome. The protein resides in the centromere. It localises to the kinetochore. It catalyses the reaction L-seryl-[protein] + ATP = O-phospho-L-seryl-[protein] + ADP + H(+). It carries out the reaction L-threonyl-[protein] + ATP = O-phospho-L-threonyl-[protein] + ADP + H(+). Its function is as follows. Component of the chromosomal passenger complex (CPC), a complex that acts as a key regulator of chromosome segregation and cytokinesis. Has a role in error-correction of aberrent kinetochore-microtubule attachments to ensure that sister kinetochores become bioriented and connect to opposite poles by promoting spindle assembly checkpoint signaling. The polypeptide is Aurora kinase (IPL1) (Eremothecium gossypii (strain ATCC 10895 / CBS 109.51 / FGSC 9923 / NRRL Y-1056) (Yeast)).